The following is an 86-amino-acid chain: U15-lycotoxin-Ls1d (86 aa).

The signal sequence occupies residues 1 to 20 (MNSKIFAVLFLLAFLSCVLS). The WAP domain occupies 21-66 (DQYCPKSSITACKKMNIRNDCCKDDDCTGGSWCCATPCGNFCKYPT). Intrachain disulfides connect C24/C54, C32/C58, C41/C53, C42/C80, and C47/C62.

The protein belongs to the venom protein 11 family. 01 (wap-1) subfamily. In terms of processing, contains 5 disulfide bonds. In terms of tissue distribution, expressed by the venom gland.

It localises to the secreted. Its function is as follows. Has antibacterial activity. This is U15-lycotoxin-Ls1d from Lycosa singoriensis (Wolf spider).